Consider the following 171-residue polypeptide: Ribosome maturation factor RimM (171 aa).

Positions 97–169 (DGEFYYHEII…RVDVDIMEGL (73 aa)) constitute a PRC barrel domain.

Belongs to the RimM family. In terms of assembly, binds ribosomal protein uS19.

The protein resides in the cytoplasm. Its function is as follows. An accessory protein needed during the final step in the assembly of 30S ribosomal subunit, possibly for assembly of the head region. Essential for efficient processing of 16S rRNA. May be needed both before and after RbfA during the maturation of 16S rRNA. It has affinity for free ribosomal 30S subunits but not for 70S ribosomes. This Lactococcus lactis subsp. cremoris (strain SK11) protein is Ribosome maturation factor RimM.